The following is a 336-amino-acid chain: DNA repair protein RAD51 homolog A (336 aa).

In terms of domain architecture, HhH spans 45–74; sequence TVEAVAYAPKKELLNIKGISEAKAEKILAE. 124–131 provides a ligand contact to ATP; sequence GEFRTGKT. The Nuclear export signal motif lies at 242–257; that stretch reads LARFLRMLLRLADEFG.

The protein belongs to the RecA family. RAD51 subfamily. Forms linear homooligomers, giving rise to a RAD51 nucleoprotein filament, which is essential for strand-pairing reactions during DNA recombination.

It is found in the nucleus. It localises to the cytoplasm. The protein localises to the chromosome. Its function is as follows. Plays an important role in homologous strand exchange, a key step in DNA repair through homologous recombination (HR). Binds to single-stranded DNA in an ATP-dependent manner to form nucleoprotein filaments which are essential for the homology search and strand exchange. Catalyzes the recognition of homology and strand exchange between homologous DNA partners to form a joint molecule between a processed DNA break and the repair template. Recruited to resolve stalled replication forks during replication stress. Also involved in interstrand cross-link repair. The polypeptide is DNA repair protein RAD51 homolog A (rad51-a) (Xenopus laevis (African clawed frog)).